A 435-amino-acid polypeptide reads, in one-letter code: Glutamyl-tRNA reductase (435 aa).

Substrate contacts are provided by residues 49–52 (TCNR), serine 109, 114–116 (ETQ), and glutamine 120. Cysteine 50 (nucleophile) is an active-site residue. 189-194 (GAGEMS) provides a ligand contact to NADP(+).

Belongs to the glutamyl-tRNA reductase family. As to quaternary structure, homodimer.

The catalysed reaction is (S)-4-amino-5-oxopentanoate + tRNA(Glu) + NADP(+) = L-glutamyl-tRNA(Glu) + NADPH + H(+). It participates in porphyrin-containing compound metabolism; protoporphyrin-IX biosynthesis; 5-aminolevulinate from L-glutamyl-tRNA(Glu): step 1/2. Functionally, catalyzes the NADPH-dependent reduction of glutamyl-tRNA(Glu) to glutamate 1-semialdehyde (GSA). The polypeptide is Glutamyl-tRNA reductase (Listeria monocytogenes serotype 4a (strain HCC23)).